Here is an 86-residue protein sequence, read N- to C-terminus: Small ribosomal subunit protein uS17 (86 aa).

The protein belongs to the universal ribosomal protein uS17 family. In terms of assembly, part of the 30S ribosomal subunit.

Its function is as follows. One of the primary rRNA binding proteins, it binds specifically to the 5'-end of 16S ribosomal RNA. This is Small ribosomal subunit protein uS17 from Exiguobacterium sp. (strain ATCC BAA-1283 / AT1b).